Consider the following 361-residue polypeptide: Chorismate synthase (361 aa).

Arg-48 and Arg-54 together coordinate NADP(+). FMN is bound by residues 131-133, 243-244, Gly-287, 302-306, and Arg-328; these read RSS, NA, and KPTSS.

Belongs to the chorismate synthase family. As to quaternary structure, homotetramer. Requires FMNH2 as cofactor.

The catalysed reaction is 5-O-(1-carboxyvinyl)-3-phosphoshikimate = chorismate + phosphate. It functions in the pathway metabolic intermediate biosynthesis; chorismate biosynthesis; chorismate from D-erythrose 4-phosphate and phosphoenolpyruvate: step 7/7. Catalyzes the anti-1,4-elimination of the C-3 phosphate and the C-6 proR hydrogen from 5-enolpyruvylshikimate-3-phosphate (EPSP) to yield chorismate, which is the branch point compound that serves as the starting substrate for the three terminal pathways of aromatic amino acid biosynthesis. This reaction introduces a second double bond into the aromatic ring system. The sequence is that of Chorismate synthase from Rhodopseudomonas palustris (strain BisB5).